Here is a 143-residue protein sequence, read N- to C-terminus: S-protein homolog 11 (143 aa).

Positions 1 to 20 (MNCFSFSFIIIVLCAGSSNA) are cleaved as a signal peptide.

Belongs to the plant self-incompatibility (S1) protein family.

The protein resides in the secreted. This is S-protein homolog 11 from Arabidopsis thaliana (Mouse-ear cress).